The primary structure comprises 247 residues: Cell division protein ZapD (247 aa).

Belongs to the ZapD family. As to quaternary structure, interacts with FtsZ.

It is found in the cytoplasm. Its function is as follows. Cell division factor that enhances FtsZ-ring assembly. Directly interacts with FtsZ and promotes bundling of FtsZ protofilaments, with a reduction in FtsZ GTPase activity. The polypeptide is Cell division protein ZapD (Escherichia coli O157:H7).